A 73-amino-acid polypeptide reads, in one-letter code: Translation initiation factor IF-1 (73 aa).

One can recognise an S1-like domain in the interval 1-73 (MAKKDGVIEI…TRGRIVYRYK (73 aa)).

The protein belongs to the IF-1 family. In terms of assembly, component of the 30S ribosomal translation pre-initiation complex which assembles on the 30S ribosome in the order IF-2 and IF-3, IF-1 and N-formylmethionyl-tRNA(fMet); mRNA recruitment can occur at any time during PIC assembly.

The protein resides in the cytoplasm. Functionally, one of the essential components for the initiation of protein synthesis. Stabilizes the binding of IF-2 and IF-3 on the 30S subunit to which N-formylmethionyl-tRNA(fMet) subsequently binds. Helps modulate mRNA selection, yielding the 30S pre-initiation complex (PIC). Upon addition of the 50S ribosomal subunit IF-1, IF-2 and IF-3 are released leaving the mature 70S translation initiation complex. The sequence is that of Translation initiation factor IF-1 from Leifsonia xyli subsp. xyli (strain CTCB07).